The sequence spans 181 residues: Adenine phosphoribosyltransferase 1 (181 aa).

This sequence belongs to the purine/pyrimidine phosphoribosyltransferase family. Homodimer.

The protein localises to the cytoplasm. The catalysed reaction is AMP + diphosphate = 5-phospho-alpha-D-ribose 1-diphosphate + adenine. It participates in purine metabolism; AMP biosynthesis via salvage pathway; AMP from adenine: step 1/1. Catalyzes a salvage reaction resulting in the formation of AMP, that is energically less costly than de novo synthesis. This Triticum aestivum (Wheat) protein is Adenine phosphoribosyltransferase 1 (APT1).